A 213-amino-acid chain; its full sequence is Octanoyltransferase (213 aa).

In terms of domain architecture, BPL/LPL catalytic spans 35–213 (DERGDAVLLL…ERHLPTLIEP (179 aa)). Substrate is bound by residues 73-80 (RGGKITWH), 145-147 (AIG), and 158-160 (GFS). Residue Cys-176 is the Acyl-thioester intermediate of the active site.

Belongs to the LipB family.

It is found in the cytoplasm. The catalysed reaction is octanoyl-[ACP] + L-lysyl-[protein] = N(6)-octanoyl-L-lysyl-[protein] + holo-[ACP] + H(+). It functions in the pathway protein modification; protein lipoylation via endogenous pathway; protein N(6)-(lipoyl)lysine from octanoyl-[acyl-carrier-protein]: step 1/2. In terms of biological role, catalyzes the transfer of endogenously produced octanoic acid from octanoyl-acyl-carrier-protein onto the lipoyl domains of lipoate-dependent enzymes. Lipoyl-ACP can also act as a substrate although octanoyl-ACP is likely to be the physiological substrate. The chain is Octanoyltransferase from Salinispora tropica (strain ATCC BAA-916 / DSM 44818 / JCM 13857 / NBRC 105044 / CNB-440).